A 2629-amino-acid polypeptide reads, in one-letter code: Telomerase protein component 1 (2629 aa).

4 TEP1 N-terminal repeats span residues 1–30 (MEKL…DLQP), 31–60 (LEKI…DLQP), 61–90 (TERI…DLQP), and 91–120 (LEKL…TVKS). Positions 227–685 (LKLTSGDSGF…VKHNLSPMPG (459 aa)) constitute a TROVE domain. Over residues 386-397 (PRKHRSKRRSRQ) the composition is skewed to basic residues. Residues 386-412 (PRKHRSKRRSRQPPRPQKTERPFSERG) are disordered. Positions 402–412 (QKTERPFSERG) are enriched in basic and acidic residues. The 408-residue stretch at 1171 to 1578 (RLSLVTGQAG…EFLTNLHVVA (408 aa)) folds into the NACHT domain. ATP is bound at residue 1177–1184 (GQAGQGKT). WD repeat units follow at residues 1420 to 1462 (VLPQ…EVLA), 1681 to 1720 (TMSS…EEKA), 1723 to 1761 (SGCD…WVFQ), 1764 to 1803 (AHQY…LAFQ), 1805 to 1844 (THPK…VTKE), 1847 to 1886 (APGP…RLAA), 1889 to 1930 (AQCG…GCLG), 1932 to 1971 (LPLS…QGPQ), 1974 to 2013 (ELNV…HSLW), 2015 to 2054 (LSRY…QPHV), 2067 to 2106 (GHEG…APLL), 2113 to 2151 (CHRD…QLGQ), 2154 to 2191 (GHQS…LTSI), 2193 to 2241 (AHSG…QIRT), 2244 to 2282 (GHSG…DDSY), 2285 to 2324 (RSSV…ATAQ), 2326 to 2362 (PGRV…GSTS), 2375 to 2424 (EDWG…SSIL), 2467 to 2507 (PNGS…GEWI), 2555 to 2592 (IHLG…LLGL), and 2594 to 2628 (RCEG…FLSW).

Associated component of the telomerase holoenzyme complex. Component of the vault ribonucleoprotein particle, at least composed of MVP, PARP4 and one or more vault RNAs (vRNAs). Binds to VAULTRC1, VAULTRC2 and VAULTRC4/hvg4 vRNAs. As to expression, ubiquitous.

The protein localises to the nucleus. The protein resides in the chromosome. It is found in the telomere. Its function is as follows. Component of the telomerase ribonucleoprotein complex that is essential for the replication of chromosome termini. Also a component of the ribonucleoprotein vaults particle, a multi-subunit structure involved in nucleo-cytoplasmic transport. Responsible for the localizing and stabilizing vault RNA (vRNA) association in the vault ribonucleoprotein particle. This chain is Telomerase protein component 1 (Tep1), found in Mus musculus (Mouse).